We begin with the raw amino-acid sequence, 91 residues long: Large ribosomal subunit protein eL37 (91 aa).

Cys-19, Cys-22, Cys-34, and Cys-37 together coordinate Zn(2+). The C4-type zinc finger occupies 19–37 (CKRCGKSSFHIQKKRCASC).

It belongs to the eukaryotic ribosomal protein eL37 family. The cofactor is Zn(2+).

Functionally, binds to the 23S rRNA. In Caenorhabditis elegans, this protein is Large ribosomal subunit protein eL37.